The primary structure comprises 180 residues: MASTVSAYKEKMKELSLLSLICSCFHTQPHPNTIYQYGDMEVKQLDKRASGQSFEVILKSPSDLSPESPILSSPPKKKDLSLEELQRRLEAAEERRKTQEAQVLKQLAEKREHEREVLHKALEENNNFSRLAEEKLNYKMELSREIREAHLAALRERLREKELHAAEVRRNKEQREEISG.

In terms of domain architecture, SLD spans 38–180 (GDMEVKQLDK…NKEQREEISG (143 aa)). A compositionally biased stretch (low complexity) spans 60-74 (SPSDLSPESPILSSP). The interval 60–82 (SPSDLSPESPILSSPPKKKDLSL) is disordered. The stretch at 75-179 (PKKKDLSLEE…RNKEQREEIS (105 aa)) forms a coiled coil.

The protein belongs to the stathmin family.

This is Stathmin-3 (STMN3) from Gallus gallus (Chicken).